The following is a 546-amino-acid chain: Cysteine--tRNA ligase (546 aa).

Zn(2+) is bound at residue C57. Residues 59-69 (ATVQSSPHIGH) carry the 'HIGH' region motif. Residues 211-236 (PSVDATGADKYNPVDPADASPDKHDP) are disordered. Residues C270, H295, and E299 each coordinate Zn(2+). The 'KMSKS' region motif lies at 326-330 (KMSKS). K329 is a binding site for ATP.

It belongs to the class-I aminoacyl-tRNA synthetase family. Monomer. Zn(2+) is required as a cofactor.

It localises to the cytoplasm. The enzyme catalyses tRNA(Cys) + L-cysteine + ATP = L-cysteinyl-tRNA(Cys) + AMP + diphosphate. The sequence is that of Cysteine--tRNA ligase from Bifidobacterium longum (strain NCC 2705).